A 213-amino-acid polypeptide reads, in one-letter code: Superoxide dismutase [Fe] (213 aa).

Positions 28, 82, 164, and 168 each coordinate Fe cation.

It belongs to the iron/manganese superoxide dismutase family. As to quaternary structure, homotetramer. Fe cation is required as a cofactor.

It catalyses the reaction 2 superoxide + 2 H(+) = H2O2 + O2. Functionally, destroys superoxide anion radicals which are normally produced within the cells and which are toxic to biological systems. The polypeptide is Superoxide dismutase [Fe] (sodB) (Aquifex pyrophilus).